Reading from the N-terminus, the 260-residue chain is Hydroxyethylthiazole kinase 1 (260 aa).

Substrate is bound at residue Met39. ATP contacts are provided by Arg115 and Thr160. Residue Gly187 participates in substrate binding.

It belongs to the Thz kinase family. Mg(2+) is required as a cofactor.

The enzyme catalyses 5-(2-hydroxyethyl)-4-methylthiazole + ATP = 4-methyl-5-(2-phosphooxyethyl)-thiazole + ADP + H(+). It functions in the pathway cofactor biosynthesis; thiamine diphosphate biosynthesis; 4-methyl-5-(2-phosphoethyl)-thiazole from 5-(2-hydroxyethyl)-4-methylthiazole: step 1/1. Functionally, catalyzes the phosphorylation of the hydroxyl group of 4-methyl-5-beta-hydroxyethylthiazole (THZ). This chain is Hydroxyethylthiazole kinase 1, found in Streptococcus pneumoniae (strain Hungary19A-6).